The following is a 332-amino-acid chain: Glycerol-3-phosphate dehydrogenase [NAD(P)+] (332 aa).

The NADPH site is built by S10, W11, K31, and K105. Sn-glycerol 3-phosphate-binding residues include K105, G136, and S138. A140 contributes to the NADPH binding site. 5 residues coordinate sn-glycerol 3-phosphate: K191, D244, S254, R255, and N256. K191 acts as the Proton acceptor in catalysis. R255 contributes to the NADPH binding site. Positions 279 and 281 each coordinate NADPH.

It belongs to the NAD-dependent glycerol-3-phosphate dehydrogenase family.

It localises to the cytoplasm. It carries out the reaction sn-glycerol 3-phosphate + NAD(+) = dihydroxyacetone phosphate + NADH + H(+). The enzyme catalyses sn-glycerol 3-phosphate + NADP(+) = dihydroxyacetone phosphate + NADPH + H(+). It functions in the pathway membrane lipid metabolism; glycerophospholipid metabolism. In terms of biological role, catalyzes the reduction of the glycolytic intermediate dihydroxyacetone phosphate (DHAP) to sn-glycerol 3-phosphate (G3P), the key precursor for phospholipid synthesis. The chain is Glycerol-3-phosphate dehydrogenase [NAD(P)+] from Anaeromyxobacter sp. (strain K).